The chain runs to 100 residues: Large ribosomal subunit protein uL23 (100 aa).

Belongs to the universal ribosomal protein uL23 family. As to quaternary structure, part of the 50S ribosomal subunit. Contacts protein L29, and trigger factor when it is bound to the ribosome.

Its function is as follows. One of the early assembly proteins it binds 23S rRNA. One of the proteins that surrounds the polypeptide exit tunnel on the outside of the ribosome. Forms the main docking site for trigger factor binding to the ribosome. The sequence is that of Large ribosomal subunit protein uL23 from Synechococcus elongatus (strain ATCC 33912 / PCC 7942 / FACHB-805) (Anacystis nidulans R2).